Reading from the N-terminus, the 265-residue chain is Transcription factor BHLH062 (265 aa).

Residues 1-26 (MVPRDRVNAAAAGGGGEGRLVQSGIV) are disordered. Residues 35–48 (PKRIHKSEREKLKR) form a basic motif; degenerate region. The 51-residue stretch at 35-85 (PKRIHKSEREKLKRDKQNDLFNELGNLLEPDRQNNGKACVLGETTRILKDL) folds into the bHLH domain. The helix-loop-helix motif stretch occupies residues 49 to 85 (DKQNDLFNELGNLLEPDRQNNGKACVLGETTRILKDL). A coiled-coil region spans residues 75–130 (LGETTRILKDLLSQVESLRKENSSLKNESHYVALERNELHDDNSMLRTEILELQNE). The segment at 200 to 265 (ESATSEDSEP…TNEEDRIGRS (66 aa)) is disordered. Residues 210–220 (SQEHGISDHVT) are compositionally biased toward basic and acidic residues. A compositionally biased stretch (polar residues) spans 245–256 (QDQQCSSGTSGT).

It belongs to the bHLH protein family. In terms of assembly, interacts with TIFY11A/JAZ9.

It localises to the nucleus. Its function is as follows. Transcription factor that plays a positive role in salt stress tolerance. Interacts with TIFY11A/JAZ9 and binds to the promoter of some potassium ion transporter genes to regulate potassium homeostasis during salt stress. The chain is Transcription factor BHLH062 from Oryza sativa subsp. japonica (Rice).